The primary structure comprises 299 residues: Oxygen-dependent coproporphyrinogen-III oxidase (299 aa).

A substrate-binding site is contributed by Ser92. Residues His96 and His106 each contribute to the a divalent metal cation site. The active-site Proton donor is His106. Residue 108-110 (NVR) participates in substrate binding. Residues His145 and His175 each coordinate a divalent metal cation. The segment at 240 to 275 (YVEFNLVWDRGTLFGLQTGGRTESILMSMPPLVRWE) is important for dimerization. 258-260 (GGR) contributes to the substrate binding site.

This sequence belongs to the aerobic coproporphyrinogen-III oxidase family. In terms of assembly, homodimer. A divalent metal cation serves as cofactor.

It localises to the cytoplasm. It catalyses the reaction coproporphyrinogen III + O2 + 2 H(+) = protoporphyrinogen IX + 2 CO2 + 2 H2O. Its pathway is porphyrin-containing compound metabolism; protoporphyrin-IX biosynthesis; protoporphyrinogen-IX from coproporphyrinogen-III (O2 route): step 1/1. Functionally, involved in the heme biosynthesis. Catalyzes the aerobic oxidative decarboxylation of propionate groups of rings A and B of coproporphyrinogen-III to yield the vinyl groups in protoporphyrinogen-IX. The chain is Oxygen-dependent coproporphyrinogen-III oxidase from Salmonella schwarzengrund (strain CVM19633).